The sequence spans 149 residues: Ribosome-binding factor A (149 aa).

Positions 123-149 are disordered; sequence LAKLREGAAPAGDADPYKTSSKSESEE.

It belongs to the RbfA family. In terms of assembly, monomer. Binds 30S ribosomal subunits, but not 50S ribosomal subunits or 70S ribosomes.

It localises to the cytoplasm. In terms of biological role, one of several proteins that assist in the late maturation steps of the functional core of the 30S ribosomal subunit. Associates with free 30S ribosomal subunits (but not with 30S subunits that are part of 70S ribosomes or polysomes). Required for efficient processing of 16S rRNA. May interact with the 5'-terminal helix region of 16S rRNA. In Corynebacterium glutamicum (strain ATCC 13032 / DSM 20300 / JCM 1318 / BCRC 11384 / CCUG 27702 / LMG 3730 / NBRC 12168 / NCIMB 10025 / NRRL B-2784 / 534), this protein is Ribosome-binding factor A.